A 379-amino-acid polypeptide reads, in one-letter code: Ribosomal RNA small subunit methyltransferase H (379 aa).

Residues 71-73, E90, D157, and H164 contribute to the S-adenosyl-L-methionine site; that span reads GGH.

It belongs to the methyltransferase superfamily. RsmH family.

Its subcellular location is the cytoplasm. The enzyme catalyses cytidine(1402) in 16S rRNA + S-adenosyl-L-methionine = N(4)-methylcytidine(1402) in 16S rRNA + S-adenosyl-L-homocysteine + H(+). Its function is as follows. Specifically methylates the N4 position of cytidine in position 1402 (C1402) of 16S rRNA. This chain is Ribosomal RNA small subunit methyltransferase H, found in Treponema pallidum (strain Nichols).